The following is a 450-amino-acid chain: Sorting nexin-4 (450 aa).

Met-1 is subject to N-acetylmethionine. The disordered stretch occupies residues 1–46 (MEQAPPDPERQLQPAPLEPLGSPDAVLGAAVGKETEGAGEESSGVD). Phosphoserine is present on Ser-22. The region spanning 61 to 187 (SVSEAEKRTG…YLFLTQEGNW (127 aa)) is the PX domain. Residues Arg-106, Ser-108, Lys-132, and Arg-154 each contribute to the a 1,2-diacyl-sn-glycero-3-phospho-(1D-myo-inositol-3-phosphate) site.

The protein belongs to the sorting nexin family. Heterodimer; heterodimerizes with SNX7 or SNX30. Interacts with WWC1/KIBRA. Identified in a complex with WWC1/KIBRA and dynein components DYNLL1 and DYNC1I2. Interacts with BIN1.

It is found in the early endosome. Its subcellular location is the early endosome membrane. Involved in the regulation of endocytosis and in several stages of intracellular trafficking. Plays a role in recycling endocytosed transferrin receptor and prevent its degradation. Involved in autophagosome assembly by regulating trafficking and recycling of phospholipid scramblase ATG9A. In Pongo abelii (Sumatran orangutan), this protein is Sorting nexin-4.